Consider the following 546-residue polypeptide: FAD-dependent monooxygenase (546 aa).

The N-terminal stretch at 1 to 17 (MYDVIVVGAGWCGLAAA) is a signal peptide. FAD is bound at residue Ile106. 2 N-linked (GlcNAc...) asparagine glycosylation sites follow: Asn239 and Asn343.

It belongs to the FAD-binding monooxygenase family. FAD serves as cofactor.

Its pathway is antifungal biosynthesis. FAD-dependent monooxygenase; part of the gene cluster that mediates the biosynthesis of the tetrahydropyranyl antifungal agent lanomycin that acts as an inhibitor of CYP51 and blocks the ergosterol biosynthesis. The biosynthesis probably begins with the formation of an hexaketide, followed by methionine mediated alkylation of C-2 and C-6, and methylation of the reduced C-3 oxygen, pyran forming reductive ring closure, oxygenation of C-4, beta-keto reduction, enoyl reduction and dehydration of the remaining oxygens, and finally, acylation with glycine to complete the biosynthesis. This chain is FAD-dependent monooxygenase, found in Pyrenophora dematioidea (Helminthosporium dematioideum).